Consider the following 393-residue polypeptide: 1-deoxy-D-xylulose 5-phosphate reductoisomerase (393 aa).

8 residues coordinate NADPH: threonine 16, glycine 17, serine 18, isoleucine 19, alanine 42, arginine 43, asparagine 44, and asparagine 127. Position 128 (lysine 128) interacts with 1-deoxy-D-xylulose 5-phosphate. Residue glutamate 129 participates in NADPH binding. Aspartate 153 lines the Mn(2+) pocket. 1-deoxy-D-xylulose 5-phosphate is bound by residues serine 154, glutamate 155, serine 179, and histidine 202. Glutamate 155 serves as a coordination point for Mn(2+). Glycine 208 provides a ligand contact to NADPH. Residues serine 215, asparagine 220, lysine 221, and glutamate 224 each contribute to the 1-deoxy-D-xylulose 5-phosphate site. A Mn(2+)-binding site is contributed by glutamate 224.

The protein belongs to the DXR family. Mg(2+) serves as cofactor. It depends on Mn(2+) as a cofactor.

It carries out the reaction 2-C-methyl-D-erythritol 4-phosphate + NADP(+) = 1-deoxy-D-xylulose 5-phosphate + NADPH + H(+). It participates in isoprenoid biosynthesis; isopentenyl diphosphate biosynthesis via DXP pathway; isopentenyl diphosphate from 1-deoxy-D-xylulose 5-phosphate: step 1/6. Its function is as follows. Catalyzes the NADPH-dependent rearrangement and reduction of 1-deoxy-D-xylulose-5-phosphate (DXP) to 2-C-methyl-D-erythritol 4-phosphate (MEP). The sequence is that of 1-deoxy-D-xylulose 5-phosphate reductoisomerase from Jannaschia sp. (strain CCS1).